The sequence spans 258 residues: Pyridoxine 5'-phosphate synthase (258 aa).

Residue Asn16 coordinates 3-amino-2-oxopropyl phosphate. Position 18-19 (18-19 (DH)) interacts with 1-deoxy-D-xylulose 5-phosphate. Arg27 serves as a coordination point for 3-amino-2-oxopropyl phosphate. His52 serves as the catalytic Proton acceptor. Arg54 and His59 together coordinate 1-deoxy-D-xylulose 5-phosphate. Glu79 serves as the catalytic Proton acceptor. Thr109 is a 1-deoxy-D-xylulose 5-phosphate binding site. His200 functions as the Proton donor in the catalytic mechanism. 3-amino-2-oxopropyl phosphate is bound by residues Gly201 and 222–223 (GH).

Belongs to the PNP synthase family. As to quaternary structure, homooctamer; tetramer of dimers.

The protein localises to the cytoplasm. It carries out the reaction 3-amino-2-oxopropyl phosphate + 1-deoxy-D-xylulose 5-phosphate = pyridoxine 5'-phosphate + phosphate + 2 H2O + H(+). Its pathway is cofactor biosynthesis; pyridoxine 5'-phosphate biosynthesis; pyridoxine 5'-phosphate from D-erythrose 4-phosphate: step 5/5. In terms of biological role, catalyzes the complicated ring closure reaction between the two acyclic compounds 1-deoxy-D-xylulose-5-phosphate (DXP) and 3-amino-2-oxopropyl phosphate (1-amino-acetone-3-phosphate or AAP) to form pyridoxine 5'-phosphate (PNP) and inorganic phosphate. In Burkholderia lata (strain ATCC 17760 / DSM 23089 / LMG 22485 / NCIMB 9086 / R18194 / 383), this protein is Pyridoxine 5'-phosphate synthase.